Here is a 184-residue protein sequence, read N- to C-terminus: Lysozyme 1 (184 aa).

The signal sequence occupies residues 1 to 20 (MNGLILFCAVVFATAVCTYG). The I-type lysozyme domain occupies 69-184 (TGMVSQQCLR…WRRVQAQGCN (116 aa)). 6 disulfides stabilise this stretch: Cys76–Cys152, Cys81–Cys87, Cys92–Cys101, Cys114–Cys134, Cys124–Cys130, and Cys148–Cys166. Glu84 functions as the Proton donor in the catalytic mechanism. The Nucleophile role is filled by Asp95. 107 to 113 (KRAYWID) contacts substrate. Substrate-binding positions include Tyr138 and 159 to 161 (HNG).

Hemolymph, labial palps, non-vesiculated cells of mantle connective tissue, cells of interlamellar junctions and epithelia surrounding the water tubes of the gills.

The protein localises to the secreted. It carries out the reaction Hydrolysis of (1-&gt;4)-beta-linkages between N-acetylmuramic acid and N-acetyl-D-glucosamine residues in a peptidoglycan and between N-acetyl-D-glucosamine residues in chitodextrins.. Functionally, has antibacterial activity against the Gram-positive bacteria L.garvieae, M.luteus and Enterococcus sp., and the Gram-negative bacteria E.coli and V.vulnificus. Weak antibacterial activity against the Gram-negative bacterium A.hydrophila. No antibacterial activity detected against the Gram-positive bacterium S.iniae or against the Gram-negative bacterium E.ictaluri. Shows some chitinase activity but no isopeptidase activity. The protein is Lysozyme 1 of Crassostrea virginica (Eastern oyster).